We begin with the raw amino-acid sequence, 353 residues long: ATPase GET3A (353 aa).

An ATP-binding site is contributed by 27-34; it reads KGGVGKTT. Asp56 is a catalytic residue. Glu226 and Asn253 together coordinate ATP. A coiled-coil region spans residues 320–353; the sequence is TTSRSNVEELERKVHTLRLQLKTAEEELERVKSG.

Belongs to the arsA ATPase family. In terms of assembly, homodimer. Interacts with GET1 and GET4.

It is found in the cytoplasm. The protein resides in the cytosol. The protein localises to the endoplasmic reticulum. The catalysed reaction is ATP + H2O = ADP + phosphate + H(+). In terms of biological role, ATPase required for the post-translational delivery of tail-anchored (TA) proteins to the endoplasmic reticulum. Recognizes and selectively binds the transmembrane domain of TA proteins in the cytosol. This complex then targets to the endoplasmic reticulum by membrane-bound receptors, where the tail-anchored protein is released for insertion. This process is regulated by ATP binding and hydrolysis. ATP binding drives the homodimer towards the closed dimer state, facilitating recognition of newly synthesized TA membrane proteins. ATP hydrolysis is required for insertion. Subsequently, the homodimer reverts towards the open dimer state, lowering its affinity for the membrane-bound receptor, and returning it to the cytosol to initiate a new round of targeting. Involved in the control of root hair growth through the regulation of syntaxin SYP123 expression. The chain is ATPase GET3A from Arabidopsis thaliana (Mouse-ear cress).